Consider the following 302-residue polypeptide: Quinolinate synthase (302 aa).

His-24 and Ser-41 together coordinate iminosuccinate. A [4Fe-4S] cluster-binding site is contributed by Cys-86. Residues 112–114 and Ser-129 contribute to the iminosuccinate site; that span reads YVN. Cys-173 provides a ligand contact to [4Fe-4S] cluster. Iminosuccinate-binding positions include 199–201 and Thr-216; that span reads HPE. Cys-259 contributes to the [4Fe-4S] cluster binding site.

Belongs to the quinolinate synthase family. Type 2 subfamily. The cofactor is [4Fe-4S] cluster.

It localises to the cytoplasm. The enzyme catalyses iminosuccinate + dihydroxyacetone phosphate = quinolinate + phosphate + 2 H2O + H(+). It functions in the pathway cofactor biosynthesis; NAD(+) biosynthesis; quinolinate from iminoaspartate: step 1/1. Its function is as follows. Catalyzes the condensation of iminoaspartate with dihydroxyacetone phosphate to form quinolinate. The sequence is that of Quinolinate synthase from Thermococcus kodakarensis (strain ATCC BAA-918 / JCM 12380 / KOD1) (Pyrococcus kodakaraensis (strain KOD1)).